Here is a 284-residue protein sequence, read N- to C-terminus: Diaminopimelate epimerase (284 aa).

Residues Asn20, Gln53, and Asn73 each contribute to the substrate site. Cys82 functions as the Proton donor in the catalytic mechanism. Residues 83 to 84 (GN), Asn167, Asn200, and 218 to 219 (ER) contribute to the substrate site. Catalysis depends on Cys227, which acts as the Proton acceptor. Residue 228–229 (GS) participates in substrate binding.

The protein belongs to the diaminopimelate epimerase family. In terms of assembly, homodimer.

Its subcellular location is the cytoplasm. The catalysed reaction is (2S,6S)-2,6-diaminopimelate = meso-2,6-diaminopimelate. The protein operates within amino-acid biosynthesis; L-lysine biosynthesis via DAP pathway; DL-2,6-diaminopimelate from LL-2,6-diaminopimelate: step 1/1. Catalyzes the stereoinversion of LL-2,6-diaminopimelate (L,L-DAP) to meso-diaminopimelate (meso-DAP), a precursor of L-lysine and an essential component of the bacterial peptidoglycan. The polypeptide is Diaminopimelate epimerase (Xanthomonas oryzae pv. oryzae (strain MAFF 311018)).